A 349-amino-acid polypeptide reads, in one-letter code: GTP 3',8-cyclase (349 aa).

Positions 24-249 constitute a Radical SAM core domain; it reads PFGRAVTYLR…KDMSYRTGGP (226 aa). Arginine 33 is a GTP binding site. Residues cysteine 40 and cysteine 44 each coordinate [4Fe-4S] cluster. Tyrosine 46 lines the S-adenosyl-L-methionine pocket. Residue cysteine 47 coordinates [4Fe-4S] cluster. GTP is bound at residue arginine 82. Glycine 86 contacts S-adenosyl-L-methionine. GTP is bound at residue threonine 116. Serine 140 is a binding site for S-adenosyl-L-methionine. Lysine 176 lines the GTP pocket. Position 210 (methionine 210) interacts with S-adenosyl-L-methionine. [4Fe-4S] cluster contacts are provided by cysteine 273 and cysteine 276. 278 to 280 lines the GTP pocket; that stretch reads RVR. Cysteine 290 is a binding site for [4Fe-4S] cluster.

The protein belongs to the radical SAM superfamily. MoaA family. Monomer and homodimer. It depends on [4Fe-4S] cluster as a cofactor.

The enzyme catalyses GTP + AH2 + S-adenosyl-L-methionine = (8S)-3',8-cyclo-7,8-dihydroguanosine 5'-triphosphate + 5'-deoxyadenosine + L-methionine + A + H(+). Its pathway is cofactor biosynthesis; molybdopterin biosynthesis. Its function is as follows. Catalyzes the cyclization of GTP to (8S)-3',8-cyclo-7,8-dihydroguanosine 5'-triphosphate. The sequence is that of GTP 3',8-cyclase from Sinorhizobium medicae (strain WSM419) (Ensifer medicae).